The sequence spans 352 residues: Biotin synthase (352 aa).

Positions 44–262 (NRVQVSTLLS…LAVARILMPK (219 aa)) constitute a Radical SAM core domain. [4Fe-4S] cluster-binding residues include Cys59, Cys63, and Cys66. [2Fe-2S] cluster contacts are provided by Cys103, Cys134, Cys194, and Arg266.

The protein belongs to the radical SAM superfamily. Biotin synthase family. In terms of assembly, homodimer. The cofactor is [4Fe-4S] cluster. It depends on [2Fe-2S] cluster as a cofactor.

It catalyses the reaction (4R,5S)-dethiobiotin + (sulfur carrier)-SH + 2 reduced [2Fe-2S]-[ferredoxin] + 2 S-adenosyl-L-methionine = (sulfur carrier)-H + biotin + 2 5'-deoxyadenosine + 2 L-methionine + 2 oxidized [2Fe-2S]-[ferredoxin]. It functions in the pathway cofactor biosynthesis; biotin biosynthesis; biotin from 7,8-diaminononanoate: step 2/2. Catalyzes the conversion of dethiobiotin (DTB) to biotin by the insertion of a sulfur atom into dethiobiotin via a radical-based mechanism. In Pseudomonas putida (strain GB-1), this protein is Biotin synthase.